A 1032-amino-acid chain; its full sequence is tRNA wybutosine-synthesizing protein 4 (1032 aa).

S-adenosyl-L-methionine contacts are provided by residues Arg-69, Gly-95, Asp-122, 169–170 (DL), and Glu-196. The segment at 702–726 (ESVEPNKSQSEKATSKPSAQSQNEP) is disordered. A compositionally biased stretch (polar residues) spans 716-725 (SKPSAQSQNE). In terms of domain architecture, JmjC spans 833-988 (PTKLPANLAV…AAGRDVYGNR (156 aa)).

It belongs to the methyltransferase superfamily. LCMT family.

It catalyses the reaction 7-[(3S)-3-amino-3-carboxypropyl]wyosine(37) in tRNA(Phe) + S-adenosyl-L-methionine = 7-[(3S)-(3-amino-3-methoxycarbonyl)propyl]wyosine(37) in tRNA(Phe) + S-adenosyl-L-homocysteine. It carries out the reaction 7-[(3S)-(3-amino-3-methoxycarbonyl)propyl]wyosine(37) in tRNA(Phe) + S-adenosyl-L-methionine + CO2 = wybutosine(37) in tRNA(Phe) + S-adenosyl-L-homocysteine + 2 H(+). It functions in the pathway tRNA modification; wybutosine-tRNA(Phe) biosynthesis. Its function is as follows. Probable S-adenosyl-L-methionine-dependent methyltransferase that acts as a component of the wybutosine biosynthesis pathway. Wybutosine is a hyper modified guanosine with a tricyclic base found at the 3'-position adjacent to the anticodon of eukaryotic phenylalanine tRNA. May methylate the carboxyl group of leucine residues to form alpha-leucine ester residues. This is tRNA wybutosine-synthesizing protein 4 (ppm2) from Aspergillus oryzae (strain ATCC 42149 / RIB 40) (Yellow koji mold).